We begin with the raw amino-acid sequence, 58 residues long: Mitochondrial import receptor subunit TOM7 homolog (58 aa).

Residues 1–16 (MKLSPATKSFIGKTVD) lie on the Cytoplasmic side of the membrane. A helical membrane pass occupies residues 17–35 (ISTFAIQWGFVPFVVYLGF). At 36 to 58 (KKGAEPMPNGQILPLSAMSLLWG) the chain is on the mitochondrial intermembrane side.

The protein belongs to the Tom7 family. Forms part of the preprotein translocase complex of the outer mitochondrial membrane (TOM complex).

It localises to the mitochondrion outer membrane. The protein is Mitochondrial import receptor subunit TOM7 homolog (tomm-7) of Caenorhabditis elegans.